Here is a 329-residue protein sequence, read N- to C-terminus: GTPase Obg (329 aa).

An Obg domain is found at 1-159; sequence MQFIDQARIT…WFLQLELKLL (159 aa). In terms of domain architecture, OBG-type G spans 160–328; it reads AEVGIIGLPN…LLAQVWKELG (169 aa). ATP is bound by residues 166–173, 191–195, 213–216, 280–283, and 309–311; these read GLPNAGKS, FTTLV, DIPG, NKQE, and SAA. The Mg(2+) site is built by Ser-173 and Thr-193.

This sequence belongs to the TRAFAC class OBG-HflX-like GTPase superfamily. OBG GTPase family. In terms of assembly, monomer. Mg(2+) is required as a cofactor.

The protein localises to the cytoplasm. In terms of biological role, an essential GTPase which binds GTP, GDP and possibly (p)ppGpp with moderate affinity, with high nucleotide exchange rates and a fairly low GTP hydrolysis rate. Plays a role in control of the cell cycle, stress response, ribosome biogenesis and in those bacteria that undergo differentiation, in morphogenesis control. The protein is GTPase Obg of Prochlorococcus marinus (strain MIT 9303).